The chain runs to 367 residues: Queuine tRNA-ribosyltransferase (367 aa).

The active-site Proton acceptor is Asp89. Substrate-binding positions include 89–93, Asp143, Gln187, and Gly214; that span reads DSGGF. The tract at residues 245–251 is RNA binding; sequence GVGTPAD. Asp264 (nucleophile) is an active-site residue. Positions 269–273 are RNA binding; important for wobble base 34 recognition; sequence TRNAR. Residues Cys302, Cys304, Cys307, and His333 each coordinate Zn(2+).

This sequence belongs to the queuine tRNA-ribosyltransferase family. In terms of assembly, homodimer. Within each dimer, one monomer is responsible for RNA recognition and catalysis, while the other monomer binds to the replacement base PreQ1. Zn(2+) serves as cofactor.

It carries out the reaction 7-aminomethyl-7-carbaguanine + guanosine(34) in tRNA = 7-aminomethyl-7-carbaguanosine(34) in tRNA + guanine. It functions in the pathway tRNA modification; tRNA-queuosine biosynthesis. Functionally, catalyzes the base-exchange of a guanine (G) residue with the queuine precursor 7-aminomethyl-7-deazaguanine (PreQ1) at position 34 (anticodon wobble position) in tRNAs with GU(N) anticodons (tRNA-Asp, -Asn, -His and -Tyr). Catalysis occurs through a double-displacement mechanism. The nucleophile active site attacks the C1' of nucleotide 34 to detach the guanine base from the RNA, forming a covalent enzyme-RNA intermediate. The proton acceptor active site deprotonates the incoming PreQ1, allowing a nucleophilic attack on the C1' of the ribose to form the product. After dissociation, two additional enzymatic reactions on the tRNA convert PreQ1 to queuine (Q), resulting in the hypermodified nucleoside queuosine (7-(((4,5-cis-dihydroxy-2-cyclopenten-1-yl)amino)methyl)-7-deazaguanosine). The sequence is that of Queuine tRNA-ribosyltransferase from Nitrosospira multiformis (strain ATCC 25196 / NCIMB 11849 / C 71).